The following is a 650-amino-acid chain: Alpha-agglutinin (650 aa).

An N-terminal signal peptide occupies residues 1–19 (MFTFLKIILWLFSLALASA). 4 N-linked (GlcNAc...) asparagine glycosylation sites follow: Asn79, Asn109, Asn135, and Asn248. Cys97 and Cys114 are disulfide-bonded. A disulfide bridge links Cys202 with Cys300. The ig-like fold domain important for alpha-agglutinin activity, contributing to a functional binding site for a-agglutinin stretch occupies residues 216–322 (YDSSNNNVDL…FSTTREFIVY (107 aa)). Ser282 carries O-linked (Man...) serine glycosylation. Residues Thr289, Thr299, and Thr303 are each glycosylated (O-linked (Man...) threonine). Asn306 is a glycosylation site (N-linked (GlcNAc...) asparagine). Thr307, Thr308, and Thr311 each carry an O-linked (Man...) threonine glycan. Ser314 carries an O-linked (Man...) serine glycan. Thr315, Thr316, and Thr329 each carry an O-linked (Man...) threonine glycan. O-linked (Man...) serine glycosylation is found at Ser331, Ser334, Ser335, and Ser338. Thr339, Thr340, Thr341, Thr342, and Thr345 each carry an O-linked (Man...) threonine glycan. 2 repeat units span residues 339 to 378 (TTTT…VTTS) and 384 to 423 (TATT…ETIS). Residues 339–423 (TTTTDLTSIN…EVISDVETIS (85 aa)) form a 2 X 40 AA tandem repeats region. O-linked (Man...) serine glycosylation occurs at Ser346. A glycan (O-linked (Man...) threonine) is linked at Thr349. Ser350 is a glycosylation site (O-linked (Man...) serine). Residues Asn364, Asn402, Asn485, Asn501, and Asn614 are each glycosylated (N-linked (GlcNAc...) asparagine). Gly627 carries the GPI-anchor amidated glycine lipid modification. Positions 628–650 (KASIFFSAELGSIIFLLLSYLLF) are cleaved as a propeptide — removed in mature form.

To C.albicans ALS1. As to quaternary structure, interacts with AGA2. In terms of processing, N-glycosylated, and O-glycosylated by both PMT1 and PMT2. Post-translationally, the GPI-anchor is attached to the protein in the endoplasmic reticulum and serves to target the protein to the cell surface. There, the glucosamine-inositol phospholipid moiety is cleaved off and the GPI-modified mannoprotein is covalently attached via its lipidless GPI glycan remnant to the 1,6-beta-glucan of the outer cell wall layer.

The protein localises to the secreted. Its subcellular location is the cell wall. It localises to the membrane. Cell surface glycoprotein promoting cell-cell contact to facilitate mating. S.cerevisiae A and alpha cells express the complementary cell surface glycoproteins A-agglutinin and alpha-, respectively, which interact with one another to promote cellular aggregation during mating. This is Alpha-agglutinin (SAG1) from Saccharomyces cerevisiae (strain ATCC 204508 / S288c) (Baker's yeast).